A 72-amino-acid polypeptide reads, in one-letter code: Translation initiation factor IF-1 (72 aa).

Residues 1–72 (MSKDDVIEID…DKGRITYRYK (72 aa)) form the S1-like domain.

The protein belongs to the IF-1 family. As to quaternary structure, component of the 30S ribosomal translation pre-initiation complex which assembles on the 30S ribosome in the order IF-2 and IF-3, IF-1 and N-formylmethionyl-tRNA(fMet); mRNA recruitment can occur at any time during PIC assembly.

It is found in the cytoplasm. One of the essential components for the initiation of protein synthesis. Stabilizes the binding of IF-2 and IF-3 on the 30S subunit to which N-formylmethionyl-tRNA(fMet) subsequently binds. Helps modulate mRNA selection, yielding the 30S pre-initiation complex (PIC). Upon addition of the 50S ribosomal subunit IF-1, IF-2 and IF-3 are released leaving the mature 70S translation initiation complex. The protein is Translation initiation factor IF-1 of Campylobacter hominis (strain ATCC BAA-381 / DSM 21671 / CCUG 45161 / LMG 19568 / NCTC 13146 / CH001A).